A 502-amino-acid chain; its full sequence is Glycerol kinase (502 aa).

T14 contacts ADP. ATP-binding residues include T14, T15, and S16. Position 14 (T14) interacts with sn-glycerol 3-phosphate. R18 contributes to the ADP binding site. R84, E85, Y136, and D246 together coordinate sn-glycerol 3-phosphate. Glycerol contacts are provided by R84, E85, Y136, D246, and Q247. ADP-binding residues include T268 and G311. ATP-binding residues include T268, G311, Q315, and G412. ADP contacts are provided by G412 and N416.

This sequence belongs to the FGGY kinase family. As to quaternary structure, homotetramer and homodimer (in equilibrium). Heterodimer with EIIA-Glc. Binds 1 zinc ion per glycerol kinase EIIA-Glc dimer. The zinc ion is important for dimerization.

The catalysed reaction is glycerol + ATP = sn-glycerol 3-phosphate + ADP + H(+). It participates in polyol metabolism; glycerol degradation via glycerol kinase pathway; sn-glycerol 3-phosphate from glycerol: step 1/1. Its activity is regulated as follows. Activity of this regulatory enzyme is affected by several metabolites. Allosterically and non-competitively inhibited by fructose 1,6-bisphosphate (FBP) and unphosphorylated phosphocarrier protein EIIA-Glc (III-Glc), an integral component of the bacterial phosphotransferase (PTS) system. Its function is as follows. Key enzyme in the regulation of glycerol uptake and metabolism. Catalyzes the phosphorylation of glycerol to yield sn-glycerol 3-phosphate. In Escherichia coli O7:K1 (strain IAI39 / ExPEC), this protein is Glycerol kinase.